We begin with the raw amino-acid sequence, 557 residues long: MSSVSKNARAYRQRKVGIKTVMPIYFERDIPDFDEEASLQRTVPLVESGVEKEEEEEKHLQQVINEAHEAIVRGSEKKLIIPTREAKNIGIIDKYYKKNFILPKTLIRFSLTVEECTNPEYCMDEHDTEYFLKLKQAQPSLSKFSELDFEIVMQTFEEEINQNQPFLSMDTSQILPLSELITSFELKDVLYLKPLASQVYPYWRERRISKGGLPIMAKAQVGDDKDDDDPYVCFRRREIRQARKTRRSDAQSYDRLRRLRQSMETSLQLLEQVYKREQKKLQALEDDYAIFQKRCLVKKLKRTLNIKDSDELLINPKRRPIEVKPAAPVPTPAPPVKTSPHPASYRPQPTRNVEVRPLLMLDDVQSAQITQFQIRLQQRLTKKEQLDRNWVDLLETPSTVIHTNYPDSFYRNIIPYYSGKETKQSHNQLSIPSSTPSTPLSDNGPTYSTPHSSLSNFNTCDSLSFSSNNSLYGYSTLLHPRNPICVRQRIGRGGRLMLDRTRALPVHRLSKPKSRVEDRWLFDIPFDADDTIILDDESDASIMFRASLLNDDMGTQS.

2 disordered regions span residues 323 to 349 (VKPAAPVPTPAPPVKTSPHPASYRPQP) and 424 to 449 (QSHNQLSIPSSTPSTPLSDNGPTYST). A compositionally biased stretch (pro residues) spans 327-337 (APVPTPAPPVK). Positions 429 to 441 (LSIPSSTPSTPLS) are enriched in low complexity.

It belongs to the enhancer of polycomb family. In terms of assembly, component of the NuA4 histone acetyltransferase complex.

The protein resides in the nucleus. Functionally, component of the NuA4 histone acetyltransferase complex which is involved in transcriptional activation of selected genes principally by acetylation of nucleosomal histone H4 and H2A. The NuA4 complex is also involved in DNA repair. Involved in gene silencing by neighboring heterochromatin, blockage of the silencing spreading along the chromosome, and required for cell cycle progression through G2/M. This is Enhancer of polycomb-like protein 1 (epl1) from Schizosaccharomyces pombe (strain 972 / ATCC 24843) (Fission yeast).